The following is a 784-amino-acid chain: Toll-like receptor 2 (784 aa).

The first 20 residues, 1 to 20 (MPRALWTAWVWAVIILSTEG), serve as a signal peptide directing secretion. The Extracellular segment spans residues 21–587 (ASDQASSLSC…ARLSLSECHR (567 aa)). The cysteines at positions 30 and 36 are disulfide-linked. LRR repeat units lie at residues 54–77 (VKSL…RCVN), 78–101 (LKTL…HLRN), 102–125 (LEYL…SLYV), 126–150 (LKFL…HLPN), 151–175 (LRTL…GLTF), 176–199 (LEEL…SIQN), 200–223 (ISHL…IVSS), 224–250 (LDCL…MSTS), 251–278 (VKKL…YVSG), 279–308 (ILEV…HLGN), 309–337 (VETL…LTGK), 338–361 (VKRV…HLKS), 362–388 (LEYL…AWPF), 389–414 (LQTL…TLEN), 415–437 (LNSL…WPGK), 438–457 (MKQL…CLPQ), 458–478 (TLEI…ILPQ), 479–500 (LKEL…FLPV), and 501–524 (LXVM…SFQQ). N-linked (GlcNAc...) asparagine glycosylation occurs at Asn114. Asn199 carries an N-linked (GlcNAc...) asparagine glycan. Cysteines 353 and 382 form a disulfide. Cys432 and Cys454 are disulfide-bonded. Residue Asn442 is glycosylated (N-linked (GlcNAc...) asparagine). The region spanning 525-579 (LKTLEAGGNNFICSCDFLSFTQGQQALGRVLVDWPDDYHCDSPSHVRGQRVQDAR) is the LRRCT domain. The chain crosses the membrane as a helical span at residues 588–608 (AAVVSAACCALFLLLLLMGVL). At 609-784 (CHRFHGLWYM…WLNLRAAIRS (176 aa)) the chain is on the cytoplasmic side. In terms of domain architecture, TIR spans 639-782 (ICYDAFVSYS…GFWLNLRAAI (144 aa)). A Glycyl lysine isopeptide (Lys-Gly) (interchain with G-Cter in ubiquitin) cross-link involves residue Lys754. Positions 761–778 (YLEWPVDETQQEGFWLNL) match the ATG16L1-binding motif motif.

Belongs to the Toll-like receptor family. As to quaternary structure, interacts with LY96, TLR1 and TLR6 (via extracellular domain). TLR2 seems to exist in heterodimers with either TLR1 or TLR6 before stimulation by the ligand. The heterodimers form bigger oligomers in response to their corresponding ligands as well as further heterotypic associations with other receptors such as CD14 and/or CD36. Binds MYD88 (via TIR domain). Interacts with TICAM1. Interacts with CNPY3. Interacts with ATG16L1. Interacts with PPP1R11. Interacts with TICAM2. Interacts with TIRAP. Post-translationally, ubiquitinated at Lys-754 by PPP1R11, leading to its degradation. Deubiquitinated by USP2. In terms of processing, glycosylation of Asn-442 is critical for secretion of the N-terminal ectodomain of TLR2.

Its subcellular location is the membrane. The protein resides in the cytoplasmic vesicle. It localises to the phagosome membrane. The protein localises to the membrane raft. In terms of biological role, cooperates with LY96 to mediate the innate immune response to bacterial lipoproteins and other microbial cell wall components. Cooperates with TLR1 or TLR6 to mediate the innate immune response to bacterial lipoproteins or lipopeptides. Acts via MYD88 and TRAF6, leading to NF-kappa-B activation, cytokine secretion and the inflammatory response. May also promote apoptosis in response to lipoproteins. Forms activation clusters composed of several receptors depending on the ligand, these clusters trigger signaling from the cell surface and subsequently are targeted to the Golgi in a lipid-raft dependent pathway. Forms the cluster TLR2:TLR6:CD14:CD36 in response to diacylated lipopeptides and TLR2:TLR1:CD14 in response to triacylated lipopeptides. In Bos indicus (Zebu), this protein is Toll-like receptor 2 (TLR2).